A 426-amino-acid polypeptide reads, in one-letter code: Glutamate-1-semialdehyde 2,1-aminomutase (426 aa).

Lys-265 carries the N6-(pyridoxal phosphate)lysine modification.

It belongs to the class-III pyridoxal-phosphate-dependent aminotransferase family. HemL subfamily. In terms of assembly, homodimer. Pyridoxal 5'-phosphate is required as a cofactor.

It is found in the cytoplasm. It catalyses the reaction (S)-4-amino-5-oxopentanoate = 5-aminolevulinate. It participates in porphyrin-containing compound metabolism; protoporphyrin-IX biosynthesis; 5-aminolevulinate from L-glutamyl-tRNA(Glu): step 2/2. The sequence is that of Glutamate-1-semialdehyde 2,1-aminomutase from Salmonella heidelberg (strain SL476).